The primary structure comprises 290 residues: ADP-ribosylation factor-like protein 13A (290 aa).

GTP contacts are provided by residues 28 to 35, 71 to 75, and 130 to 133; these read GLNNSGKT, DLNGD, and NKQD. A disordered region spans residues 204-226; sequence SKNNTGSGERCSSHSFSTRTGMS.

Belongs to the small GTPase superfamily. Arf family.

This Homo sapiens (Human) protein is ADP-ribosylation factor-like protein 13A (ARL13A).